Here is a 361-residue protein sequence, read N- to C-terminus: Histidine biosynthesis bifunctional protein HisB (361 aa).

The segment at 1 to 172 (MTQPTLFIDR…PKTTACKRPP (172 aa)) is histidinol-phosphatase. Catalysis depends on D9, which acts as the Nucleophile. D9 and D11 together coordinate Mg(2+). D11 acts as the Proton donor in catalysis. The Zn(2+) site is built by C92, H94, C100, and C102. Position 129 (D129) interacts with Mg(2+). Residues 173–361 (RYAEVVRTTK…NELPSSKGVL (189 aa)) are imidazoleglycerol-phosphate dehydratase.

In the N-terminal section; belongs to the histidinol-phosphatase family. It in the C-terminal section; belongs to the imidazoleglycerol-phosphate dehydratase family. Mg(2+) is required as a cofactor. It depends on Zn(2+) as a cofactor.

The protein localises to the cytoplasm. It carries out the reaction D-erythro-1-(imidazol-4-yl)glycerol 3-phosphate = 3-(imidazol-4-yl)-2-oxopropyl phosphate + H2O. The enzyme catalyses L-histidinol phosphate + H2O = L-histidinol + phosphate. The protein operates within amino-acid biosynthesis; L-histidine biosynthesis; L-histidine from 5-phospho-alpha-D-ribose 1-diphosphate: step 6/9. It functions in the pathway amino-acid biosynthesis; L-histidine biosynthesis; L-histidine from 5-phospho-alpha-D-ribose 1-diphosphate: step 8/9. The polypeptide is Histidine biosynthesis bifunctional protein HisB (Actinobacillus pleuropneumoniae serotype 3 (strain JL03)).